The sequence spans 197 residues: NADH-quinone oxidoreductase subunit C (197 aa).

The protein belongs to the complex I 30 kDa subunit family. As to quaternary structure, NDH-1 is composed of 14 different subunits. Subunits NuoB, C, D, E, F, and G constitute the peripheral sector of the complex.

The protein resides in the cell inner membrane. The catalysed reaction is a quinone + NADH + 5 H(+)(in) = a quinol + NAD(+) + 4 H(+)(out). In terms of biological role, NDH-1 shuttles electrons from NADH, via FMN and iron-sulfur (Fe-S) centers, to quinones in the respiratory chain. The immediate electron acceptor for the enzyme in this species is believed to be ubiquinone. Couples the redox reaction to proton translocation (for every two electrons transferred, four hydrogen ions are translocated across the cytoplasmic membrane), and thus conserves the redox energy in a proton gradient. This chain is NADH-quinone oxidoreductase subunit C, found in Neisseria meningitidis serogroup B (strain ATCC BAA-335 / MC58).